The primary structure comprises 156 residues: Ribosome maturation factor RimP (156 aa).

This sequence belongs to the RimP family.

It localises to the cytoplasm. Required for maturation of 30S ribosomal subunits. The protein is Ribosome maturation factor RimP of Bacillus cereus (strain B4264).